A 42-amino-acid polypeptide reads, in one-letter code: uncharacterized protein (42 aa).

Residues 15-37 (PLILAVDCAIIIPNTNFIHSFLI) traverse the membrane as a helical segment.

The protein localises to the membrane. This is an uncharacterized protein from Dictyostelium discoideum (Social amoeba).